The sequence spans 87 residues: Small ribosomal subunit protein bS16 (87 aa).

This sequence belongs to the bacterial ribosomal protein bS16 family.

In Ehrlichia ruminantium (strain Gardel), this protein is Small ribosomal subunit protein bS16.